The sequence spans 276 residues: Probable endonuclease 4 (276 aa).

Zn(2+)-binding residues include His-70, His-108, Glu-143, Asp-176, His-179, His-210, Asp-223, His-225, and Glu-255.

It belongs to the AP endonuclease 2 family. Zn(2+) serves as cofactor.

The enzyme catalyses Endonucleolytic cleavage to 5'-phosphooligonucleotide end-products.. Its function is as follows. Endonuclease IV plays a role in DNA repair. It cleaves phosphodiester bonds at apurinic or apyrimidinic (AP) sites, generating a 3'-hydroxyl group and a 5'-terminal sugar phosphate. This Mesomycoplasma hyopneumoniae (strain J / ATCC 25934 / NCTC 10110) (Mycoplasma hyopneumoniae) protein is Probable endonuclease 4.